Consider the following 191-residue polypeptide: Inosine triphosphate pyrophosphatase (191 aa).

15 to 20 is an ITP binding site; that stretch reads TGNANK. E43 contacts Mg(2+). ITP-binding positions include K55, 71–72, K88, 147–150, K168, and 173–174; these read DT, FGWD, and HR.

It belongs to the HAM1 NTPase family. In terms of assembly, homodimer. Mg(2+) is required as a cofactor. It depends on Mn(2+) as a cofactor.

The protein localises to the cytoplasm. It localises to the nucleus. It catalyses the reaction ITP + H2O = IMP + diphosphate + H(+). The enzyme catalyses dITP + H2O = dIMP + diphosphate + H(+). It carries out the reaction XTP + H2O = XMP + diphosphate + H(+). In terms of biological role, pyrophosphatase that hydrolyzes non-canonical purine nucleotides such as inosine triphosphate (ITP), deoxyinosine triphosphate (dITP) or xanthosine 5'-triphosphate (XTP) to their respective monophosphate derivatives. The enzyme does not distinguish between the deoxy- and ribose forms. Probably excludes non-canonical purines from RNA and DNA precursor pools, thus preventing their incorporation into RNA and DNA and avoiding chromosomal lesions. This chain is Inosine triphosphate pyrophosphatase, found in Neurospora crassa (strain ATCC 24698 / 74-OR23-1A / CBS 708.71 / DSM 1257 / FGSC 987).